The chain runs to 115 residues: DNA-binding protein PYRAB09250 (115 aa).

Belongs to the PDCD5 family.

This chain is DNA-binding protein PYRAB09250, found in Pyrococcus abyssi (strain GE5 / Orsay).